Reading from the N-terminus, the 171-residue chain is Calcium-binding allergen Ole e 8 (171 aa).

4 consecutive EF-hand domains span residues 16–51 (QEPN…LGSN), 52–87 (TSKE…ETDP), 92–127 (GGEN…LGER), and 128–163 (YAEH…KSGN). Ca(2+) contacts are provided by D29, N31, D33, K35, E40, D65, D67, D69, E76, D105, D107, N109, E116, D141, D143, D145, Y147, and E152.

As to quaternary structure, homodimer. In terms of tissue distribution, expressed in pollen.

The polypeptide is Calcium-binding allergen Ole e 8 (Olea europaea (Common olive)).